Reading from the N-terminus, the 494-residue chain is Cysteine--tRNA ligase (494 aa).

Cysteine 29 contributes to the Zn(2+) binding site. A 'HIGH' region motif is present at residues 31–41; sequence VTVYDHCHIGH. Cysteine 209, histidine 234, and glutamate 238 together coordinate Zn(2+). Residues 266-270 carry the 'KMSKS' region motif; sequence KMSKS. Position 269 (lysine 269) interacts with ATP.

This sequence belongs to the class-I aminoacyl-tRNA synthetase family. In terms of assembly, monomer. Zn(2+) serves as cofactor.

It is found in the cytoplasm. The catalysed reaction is tRNA(Cys) + L-cysteine + ATP = L-cysteinyl-tRNA(Cys) + AMP + diphosphate. This chain is Cysteine--tRNA ligase, found in Geotalea uraniireducens (strain Rf4) (Geobacter uraniireducens).